A 267-amino-acid polypeptide reads, in one-letter code: Phosphonates import ATP-binding protein PhnC 2 (267 aa).

An ABC transporter domain is found at 3–247 (LSLDGVDLVH…ALDALYANEQ (245 aa)). 36–43 (GPSGAGKT) lines the ATP pocket.

The protein belongs to the ABC transporter superfamily. Phosphonates importer (TC 3.A.1.9.1) family. As to quaternary structure, the complex is composed of two ATP-binding proteins (PhnC), two transmembrane proteins (PhnE) and a solute-binding protein (PhnD).

It is found in the cell inner membrane. It carries out the reaction phosphonate(out) + ATP + H2O = phosphonate(in) + ADP + phosphate + H(+). Functionally, part of the ABC transporter complex PhnCDE involved in phosphonates import. Responsible for energy coupling to the transport system. The sequence is that of Phosphonates import ATP-binding protein PhnC 2 from Pseudomonas aeruginosa (strain UCBPP-PA14).